We begin with the raw amino-acid sequence, 301 residues long: Probable alpha-L-glutamate ligase (301 aa).

The region spanning 104-287 (LQLLSRRGIG…VAGIIIEHLE (184 aa)) is the ATP-grasp domain. ATP contacts are provided by residues Lys141, 178-179 (EY), Asp187, and 211-213 (RSN). Residues Asp248, Glu260, and Asn262 each coordinate Mg(2+). 3 residues coordinate Mn(2+): Asp248, Glu260, and Asn262.

It belongs to the RimK family. It depends on Mg(2+) as a cofactor. Requires Mn(2+) as cofactor.

This Pseudomonas fluorescens (strain Pf0-1) protein is Probable alpha-L-glutamate ligase.